The primary structure comprises 238 residues: Large ribosomal subunit protein uL2 (238 aa).

The segment covering 1-11 (MGKRLISQNRG) has biased composition (polar residues). Disordered regions lie at residues 1 to 22 (MGKRLISQNRGRGTPTYRAPSH) and 202 to 223 (FGGGAWKHPGKPTTVSRNAPPG).

The protein belongs to the universal ribosomal protein uL2 family. In terms of assembly, part of the 50S ribosomal subunit. Forms a bridge to the 30S subunit in the 70S ribosome.

Functionally, one of the primary rRNA binding proteins. Required for association of the 30S and 50S subunits to form the 70S ribosome, for tRNA binding and peptide bond formation. It has been suggested to have peptidyltransferase activity; this is somewhat controversial. Makes several contacts with the 16S rRNA in the 70S ribosome. The protein is Large ribosomal subunit protein uL2 of Methanosarcina mazei (strain ATCC BAA-159 / DSM 3647 / Goe1 / Go1 / JCM 11833 / OCM 88) (Methanosarcina frisia).